The chain runs to 294 residues: uncharacterized protein (294 aa).

2 disordered regions span residues Val-25 to Arg-59 and Leu-77 to Pro-141. Acidic residues predominate over residues Tyr-86–Glu-139. Residues Ile-201–Lys-234 adopt a coiled-coil conformation. The span at Thr-242–Asp-259 shows a compositional bias: basic and acidic residues. Residues Thr-242 to Glu-294 are disordered. The span at Ile-260–Glu-283 shows a compositional bias: acidic residues.

This is an uncharacterized protein from Magallana gigas (Pacific oyster).